The chain runs to 390 residues: S-adenosylmethionine synthase (390 aa).

Position 17 (His17) interacts with ATP. Position 19 (Asp19) interacts with Mg(2+). Glu45 contributes to the K(+) binding site. L-methionine contacts are provided by Glu58 and Gln101. The flexible loop stretch occupies residues 101–111 (QSPDIGQGVDT). ATP-binding positions include 160 to 162 (DGK), 226 to 227 (RF), Asp235, 241 to 242 (RK), Ala258, and Lys262. Residue Asp235 coordinates L-methionine. Lys266 contacts L-methionine.

It belongs to the AdoMet synthase family. As to quaternary structure, homotetramer; dimer of dimers. Mg(2+) serves as cofactor. It depends on K(+) as a cofactor.

It is found in the cytoplasm. It carries out the reaction L-methionine + ATP + H2O = S-adenosyl-L-methionine + phosphate + diphosphate. The protein operates within amino-acid biosynthesis; S-adenosyl-L-methionine biosynthesis; S-adenosyl-L-methionine from L-methionine: step 1/1. Its function is as follows. Catalyzes the formation of S-adenosylmethionine (AdoMet) from methionine and ATP. The overall synthetic reaction is composed of two sequential steps, AdoMet formation and the subsequent tripolyphosphate hydrolysis which occurs prior to release of AdoMet from the enzyme. This chain is S-adenosylmethionine synthase, found in Anaeromyxobacter dehalogenans (strain 2CP-1 / ATCC BAA-258).